A 1887-amino-acid polypeptide reads, in one-letter code: Bifunctional serine/threonine-protein kinase/NEDD4-like E3 ubiquitin-protein ligase (1887 aa).

2 disordered regions span residues 19-55 (TPQVNLFNNSNNGGNNSNNGGNNSTPTLTKTPSTTNF) and 72-98 (TDNYNFNNNNNNNNNNNNNNNNNTKEN). 2 stretches are compositionally biased toward low complexity: residues 26–54 (NNSNNGGNNSNNGGNNSTPTLTKTPSTTN) and 72–97 (TDNYNFNNNNNNNNNNNNNNNNNTKE). RCC1 repeat units lie at residues 206-260 (QGNL…ALTI), 262-314 (GKVY…NNNN), 356-409 (KGLL…VLTN), 411-470 (GLVF…AISD), 472-528 (NDTY…AMSI), and 529-581 (DGSL…IVEK). The tract at residues 299–333 (NNNNNNNNNNSTNNNNNNNNDGAQQQFSLSQNSSS) is disordered. Disordered regions lie at residues 594-619 (LPSSTQSQQQTELSLPSSVNSSSDSN), 823-858 (VLVHQDEKQQQREKSETELEEEQDEEEEDSEIKNGT), and 1030-1088 (DDDN…NNNN). The segment covering 825–839 (VHQDEKQQQREKSET) has biased composition (basic and acidic residues). The segment covering 840–852 (ELEEEQDEEEEDS) has biased composition (acidic residues). Residues 1036-1088 (ENNSVNNNSNNNNNNNNNNNNNNNNNNNNNNNIDNNINSNSINDSSNNNNNNN) are compositionally biased toward low complexity. Positions 1158–1437 (YDIIKTLSTH…AHQIAVHPYF (280 aa)) constitute a Protein kinase domain. Residues 1164–1172 (LSTHPHNVY) and K1184 contribute to the ATP site. D1281 serves as the catalytic Proton acceptor. One can recognise an HECT domain in the interval 1501–1887 (ESNKLFCRLE…LEYVDGFAFI (387 aa)). Positions 1586–1628 (NNNNNNEENNNNNNNNNNNNNNNNNNNNNNNNNNNNNNNNNEE) are disordered. The Glycyl thioester intermediate role is filled by C1855.

It in the N-terminal section; belongs to the protein kinase superfamily. Ser/Thr protein kinase family. The protein in the C-terminal section; belongs to the protein kinase superfamily. CAMK Ser/Thr protein kinase family.

It carries out the reaction L-seryl-[protein] + ATP = O-phospho-L-seryl-[protein] + ADP + H(+). It catalyses the reaction L-threonyl-[protein] + ATP = O-phospho-L-threonyl-[protein] + ADP + H(+). The enzyme catalyses S-ubiquitinyl-[E2 ubiquitin-conjugating enzyme]-L-cysteine + [acceptor protein]-L-lysine = [E2 ubiquitin-conjugating enzyme]-L-cysteine + N(6)-ubiquitinyl-[acceptor protein]-L-lysine.. Its pathway is protein modification; protein ubiquitination. This Dictyostelium discoideum (Social amoeba) protein is Bifunctional serine/threonine-protein kinase/NEDD4-like E3 ubiquitin-protein ligase.